We begin with the raw amino-acid sequence, 477 residues long: D-alanyl-D-alanine carboxypeptidase DacB (477 aa).

An N-terminal signal peptide occupies residues 1 to 20 (MRFSRFIIGLTSCIAFSVQA). Catalysis depends on S62, which acts as the Acyl-ester intermediate. Catalysis depends on K65, which acts as the Proton acceptor. The interval 90-263 (GNVENGVLKG…YAGAILKDEL (174 aa)) is absent in class-A beta-lactamases. S306 is a catalytic residue. K417 serves as a coordination point for substrate.

This sequence belongs to the peptidase S13 family.

It is found in the periplasm. It catalyses the reaction Preferential cleavage: (Ac)2-L-Lys-D-Ala-|-D-Ala. Also transpeptidation of peptidyl-alanyl moieties that are N-acyl substituents of D-alanine.. Its pathway is cell wall biogenesis; peptidoglycan biosynthesis. Its function is as follows. Not involved in transpeptidation but exclusively catalyzes a DD-carboxypeptidase and DD-endopeptidase reaction. The protein is D-alanyl-D-alanine carboxypeptidase DacB (dacB) of Escherichia coli (strain K12).